The following is a 163-amino-acid chain: Nucleotide-binding protein HAPS_2236 (163 aa).

This sequence belongs to the YajQ family.

In terms of biological role, nucleotide-binding protein. In Glaesserella parasuis serovar 5 (strain SH0165) (Haemophilus parasuis), this protein is Nucleotide-binding protein HAPS_2236.